The sequence spans 191 residues: Xanthine phosphoribosyltransferase (191 aa).

The xanthine site is built by Leu-20 and Asn-27. Position 128–132 (128–132 (ANGQA)) interacts with 5-phospho-alpha-D-ribose 1-diphosphate. Residue Lys-156 participates in xanthine binding.

The protein belongs to the purine/pyrimidine phosphoribosyltransferase family. Xpt subfamily. In terms of assembly, homodimer.

Its subcellular location is the cytoplasm. The enzyme catalyses XMP + diphosphate = xanthine + 5-phospho-alpha-D-ribose 1-diphosphate. Its pathway is purine metabolism; XMP biosynthesis via salvage pathway; XMP from xanthine: step 1/1. In terms of biological role, converts the preformed base xanthine, a product of nucleic acid breakdown, to xanthosine 5'-monophosphate (XMP), so it can be reused for RNA or DNA synthesis. The polypeptide is Xanthine phosphoribosyltransferase (Acinetobacter baylyi (strain ATCC 33305 / BD413 / ADP1)).